The sequence spans 99 residues: DNA-binding protein HU (99 aa).

Residues 67–86 form a disordered region; sequence REGRNPKTGAKMKIDAYNQP.

Belongs to the bacterial histone-like protein family. In terms of assembly, homodimer.

Histone-like DNA-binding protein which is capable of wrapping DNA to stabilize it, and thus to prevent its denaturation under extreme environmental conditions. In Rickettsia conorii (strain ATCC VR-613 / Malish 7), this protein is DNA-binding protein HU (hup).